Consider the following 351-residue polypeptide: Beta-hexosaminidase (351 aa).

Residues aspartate 62, arginine 70, arginine 133, and 163 to 164 (KH) each bind substrate. Histidine 176 acts as the Proton donor/acceptor in catalysis. The active-site Nucleophile is aspartate 248.

It belongs to the glycosyl hydrolase 3 family. NagZ subfamily. In terms of assembly, monomer.

The protein resides in the cytoplasm. It carries out the reaction Hydrolysis of terminal non-reducing N-acetyl-D-hexosamine residues in N-acetyl-beta-D-hexosaminides.. The protein operates within cell wall biogenesis; peptidoglycan recycling. Its function is as follows. Plays a role in peptidoglycan recycling by cleaving the terminal beta-1,4-linked N-acetylglucosamine (GlcNAc) from peptide-linked peptidoglycan fragments, giving rise to free GlcNAc, anhydro-N-acetylmuramic acid and anhydro-N-acetylmuramic acid-linked peptides. This Haemophilus influenzae (strain ATCC 51907 / DSM 11121 / KW20 / Rd) protein is Beta-hexosaminidase.